Here is a 174-residue protein sequence, read N- to C-terminus: Shikimate kinase 2 (174 aa).

12–17 provides a ligand contact to ATP; that stretch reads GCGKTT. The Mg(2+) site is built by T16 and D32. Substrate contacts are provided by D34, R58, and G79. The tract at residues 112–126 is LID domain; that stretch reads QAAPEEDLRPTLTGK. ATP is bound at residue R120. R139 contributes to the substrate binding site.

This sequence belongs to the shikimate kinase family. AroL subfamily. As to quaternary structure, monomer. It depends on Mg(2+) as a cofactor.

Its subcellular location is the cytoplasm. The catalysed reaction is shikimate + ATP = 3-phosphoshikimate + ADP + H(+). It participates in metabolic intermediate biosynthesis; chorismate biosynthesis; chorismate from D-erythrose 4-phosphate and phosphoenolpyruvate: step 5/7. Its function is as follows. Catalyzes the specific phosphorylation of the 3-hydroxyl group of shikimic acid using ATP as a cosubstrate. In Shigella dysenteriae serotype 1 (strain Sd197), this protein is Shikimate kinase 2.